The sequence spans 545 residues: MTTRYIFVTGGVVSSLGKGIAAASLAAILEARGLNVTIMKLDPYINVDPGTMSPTQHGEVFVTEDGAETDLDLGHYERFIRTKMNRRNNFTTGRIYEEVLRKERRGDYLGATIQVIPHITNAIKEKVLAGGEGHDVAIVEIGGTVGDIESLPFLESIRQLGVELGRDRTLFMHLTLVPFLGAAGEVKTKPTQHSVKELRSIGIAPDVLVCRGDRAIPANEKAKISLFCNVEERAVISLKDVDSIYKIPALLRSQGLDDLVVKRFGLECREADLSEWENVIYQEANPNGEVVIGMVGKYIELPDAYKSVNEALKHAGLKNRVSVTIKYIDSQTVEAKGEEVLQGLDGILVPGGFGERGVEGKILAAKFARENNLPYFGICLGMQVALIEFARNVAGMADAHSTEFNKETPFPVVGLITEWIDEEGNVEQRHEASDLGGTMRLGAQLCHLLEGSKAAQAYKGNSCVERHRHRYEVNNKYRERLEQAGMIFSGLSSDRKLVEMIELKDHPWFVAGQFHPEFTSTPRDGHPLFEGFIAAASAHQKRDLK.

Positions 1–266 (MTTRYIFVTG…DDLVVKRFGL (266 aa)) are amidoligase domain. Residue Ser14 coordinates CTP. Ser14 provides a ligand contact to UTP. Residues 15 to 20 (SLGKGI) and Asp72 contribute to the ATP site. Mg(2+) is bound by residues Asp72 and Glu140. Residues 147 to 149 (DIE), 187 to 192 (KTKPTQ), and Lys223 contribute to the CTP site. UTP contacts are provided by residues 187–192 (KTKPTQ) and Lys223. An ATP-binding site is contributed by 239–241 (KDV). The 252-residue stretch at 291–542 (VIGMVGKYIE…IAAASAHQKR (252 aa)) folds into the Glutamine amidotransferase type-1 domain. L-glutamine is bound at residue Gly352. The Nucleophile; for glutamine hydrolysis role is filled by Cys379. Residues 380–383 (LGMQ), Glu403, and Arg470 each bind L-glutamine. Residues His515 and Glu517 contribute to the active site.

It belongs to the CTP synthase family. As to quaternary structure, homotetramer.

It catalyses the reaction UTP + L-glutamine + ATP + H2O = CTP + L-glutamate + ADP + phosphate + 2 H(+). The enzyme catalyses L-glutamine + H2O = L-glutamate + NH4(+). It carries out the reaction UTP + NH4(+) + ATP = CTP + ADP + phosphate + 2 H(+). It participates in pyrimidine metabolism; CTP biosynthesis via de novo pathway; CTP from UDP: step 2/2. Allosterically activated by GTP, when glutamine is the substrate; GTP has no effect on the reaction when ammonia is the substrate. The allosteric effector GTP functions by stabilizing the protein conformation that binds the tetrahedral intermediate(s) formed during glutamine hydrolysis. Inhibited by the product CTP, via allosteric rather than competitive inhibition. Its function is as follows. Catalyzes the ATP-dependent amination of UTP to CTP with either L-glutamine or ammonia as the source of nitrogen. Regulates intracellular CTP levels through interactions with the four ribonucleotide triphosphates. The sequence is that of CTP synthase from Shewanella baltica (strain OS223).